We begin with the raw amino-acid sequence, 479 residues long: Aspartyl/glutamyl-tRNA(Asn/Gln) amidotransferase subunit B (479 aa).

It belongs to the GatB/GatE family. GatB subfamily. In terms of assembly, heterotrimer of A, B and C subunits.

The catalysed reaction is L-glutamyl-tRNA(Gln) + L-glutamine + ATP + H2O = L-glutaminyl-tRNA(Gln) + L-glutamate + ADP + phosphate + H(+). It carries out the reaction L-aspartyl-tRNA(Asn) + L-glutamine + ATP + H2O = L-asparaginyl-tRNA(Asn) + L-glutamate + ADP + phosphate + 2 H(+). Functionally, allows the formation of correctly charged Asn-tRNA(Asn) or Gln-tRNA(Gln) through the transamidation of misacylated Asp-tRNA(Asn) or Glu-tRNA(Gln) in organisms which lack either or both of asparaginyl-tRNA or glutaminyl-tRNA synthetases. The reaction takes place in the presence of glutamine and ATP through an activated phospho-Asp-tRNA(Asn) or phospho-Glu-tRNA(Gln). This is Aspartyl/glutamyl-tRNA(Asn/Gln) amidotransferase subunit B from Geotalea uraniireducens (strain Rf4) (Geobacter uraniireducens).